A 315-amino-acid polypeptide reads, in one-letter code: NADH-cytochrome b5 reductase-like (315 aa).

An Oxidoreductase-like domain is found at 19 to 55; it reads RPTEPLPSQCCGSGCSPCVFDLYHRDLARWEAAQASK. The 103-residue stretch at 75–177 folds into the FAD-binding FR-type domain; sequence ETFVAFCIIA…RGPFGDFFYK (103 aa). FAD is bound by residues 157 to 172 and 182 to 214; these read ESWR…GPFG and GELL…TFVT.

Belongs to the flavoprotein pyridine nucleotide cytochrome reductase family. FAD serves as cofactor.

The enzyme catalyses 2 Fe(III)-[cytochrome b5] + NADH = 2 Fe(II)-[cytochrome b5] + NAD(+) + H(+). NADH-cytochrome b5 reductases are involved in desaturation and elongation of fatty acids, cholesterol biosynthesis, drug metabolism, and, in erythrocyte, methemoglobin reduction. This chain is NADH-cytochrome b5 reductase-like (CYB5RL), found in Homo sapiens (Human).